A 94-amino-acid chain; its full sequence is Putative RNA-binding protein RbpD (94 aa).

Positions 2 to 79 (TIYVGNLSYR…RQLRVNKAKP (78 aa)) constitute an RRM domain. The tract at residues 73–94 (RVNKAKPREDDRRGSWGKKQDY) is disordered. Basic and acidic residues predominate over residues 78 to 94 (KPREDDRRGSWGKKQDY).

In Nostoc sp. (strain PCC 7120 / SAG 25.82 / UTEX 2576), this protein is Putative RNA-binding protein RbpD (rbpD).